Here is a 919-residue protein sequence, read N- to C-terminus: Probable glucan 1,3-alpha-glucosidase (919 aa).

An N-terminal signal peptide occupies residues methionine 1–alanine 28. Aspartate 510 serves as the catalytic Nucleophile. The active site involves glutamate 513. The active-site Proton donor is the aspartate 586. Asparagine 802 carries an N-linked (GlcNAc...) asparagine glycan.

This sequence belongs to the glycosyl hydrolase 31 family. Heterodimer of a catalytic alpha subunit and a beta subunit.

It is found in the endoplasmic reticulum. The catalysed reaction is N(4)-(alpha-D-Glc-(1-&gt;3)-alpha-D-Man-(1-&gt;2)-alpha-D-Man-(1-&gt;2)-alpha-D-Man-(1-&gt;3)-[alpha-D-Man-(1-&gt;2)-alpha-D-Man-(1-&gt;3)-[alpha-D-Man-(1-&gt;2)-alpha-D-Man-(1-&gt;6)]-alpha-D-Man-(1-&gt;6)]-beta-D-Man-(1-&gt;4)-beta-D-GlcNAc-(1-&gt;4)-beta-D-GlcNAc)-L-asparaginyl-[protein] + H2O = N(4)-(alpha-D-Man-(1-&gt;2)-alpha-D-Man-(1-&gt;2)-alpha-D-Man-(1-&gt;3)-[alpha-D-Man-(1-&gt;2)-alpha-D-Man-(1-&gt;3)-[alpha-D-Man-(1-&gt;2)-alpha-D-Man-(1-&gt;6)]-alpha-D-Man-(1-&gt;6)]-beta-D-Man-(1-&gt;4)-beta-D-GlcNAc-(1-&gt;4)-beta-D-GlcNAc)-L-asparaginyl-[protein] (N-glucan mannose isomer 9A1,2,3B1,2,3) + beta-D-glucose. It catalyses the reaction N(4)-(alpha-D-Glc-(1-&gt;3)-alpha-D-Glc-(1-&gt;3)-alpha-D-Man-(1-&gt;2)-alpha-D-Man-(1-&gt;2)-alpha-D-Man-(1-&gt;3)-[alpha-D-Man-(1-&gt;2)-alpha-D-Man-(1-&gt;3)-[alpha-D-Man-(1-&gt;2)-alpha-D-Man-(1-&gt;6)]-alpha-D-Man-(1-&gt;6)]-beta-D-Man-(1-&gt;4)-beta-D-GlcNAc-(1-&gt;4)-beta-D-GlcNAc)-L-asparaginyl-[protein] + H2O = N(4)-(alpha-D-Glc-(1-&gt;3)-alpha-D-Man-(1-&gt;2)-alpha-D-Man-(1-&gt;2)-alpha-D-Man-(1-&gt;3)-[alpha-D-Man-(1-&gt;2)-alpha-D-Man-(1-&gt;3)-[alpha-D-Man-(1-&gt;2)-alpha-D-Man-(1-&gt;6)]-alpha-D-Man-(1-&gt;6)]-beta-D-Man-(1-&gt;4)-beta-D-GlcNAc-(1-&gt;4)-beta-D-GlcNAc)-L-asparaginyl-[protein] + beta-D-glucose. The protein operates within glycan metabolism; N-glycan metabolism. Functionally, cleaves sequentially the 2 innermost alpha-1,3-linked glucose residues from the Glc(2)Man(9)GlcNAc(2) oligosaccharide precursor of immature glycoproteins. May be required for defense response elicited by pathogen-associated molecular patterns (PAMPs). This Oryza sativa subsp. japonica (Rice) protein is Probable glucan 1,3-alpha-glucosidase.